The chain runs to 1154 residues: PAN2-PAN3 deadenylation complex catalytic subunit pan2 (1154 aa).

3 WD repeats span residues 20–59, 102–145, and 276–315; these read GLPTVATTIAFDDVSELLWAGNEYGRITSFYGPELQRYTS, THDE…DKLR, and ATVSFMLGIEISPSGEALAINDAECFIQLWGSPAKIHFNE. A linker region spans residues 316-451; the sequence is MSKEVEFADV…GARISGESED (136 aa). The USP domain maps to 452 to 821; that stretch reads DPLLKYSNVE…SPCVLAFQVR (370 aa). One can recognise an Exonuclease domain in the interval 870–1048; the sequence is VALDTEFVDL…IEDARMALRL (179 aa). A divalent metal cation contacts are provided by Asp873, Glu875, Asp982, and Asp1041. The segment at 1092–1154 is disordered; the sequence is PGTAVTMQNN…GEFFTGSPLK (63 aa). Polar residues-rich tracts occupy residues 1096 to 1109 and 1132 to 1141; these read VTMQNNSGRNTPST and LTPSNGTFSG.

The protein belongs to the peptidase C19 family. PAN2 subfamily. Forms a heterotrimer with an asymmetric homodimer of the regulatory subunit pan3 to form the poly(A)-nuclease (PAN) deadenylation complex. The cofactor is a divalent metal cation.

Its subcellular location is the cytoplasm. The enzyme catalyses Exonucleolytic cleavage of poly(A) to 5'-AMP.. With respect to regulation, positively regulated by the regulatory subunit pan3. In terms of biological role, catalytic subunit of the poly(A)-nuclease (PAN) deadenylation complex, one of two cytoplasmic mRNA deadenylases involved in mRNA turnover. PAN specifically shortens poly(A) tails of RNA and the activity is stimulated by poly(A)-binding protein pab1. PAN deadenylation is followed by rapid degradation of the shortened mRNA tails by the CCR4-NOT complex. Deadenylated mRNAs are then degraded by two alternative mechanisms, namely exosome-mediated 3'-5' exonucleolytic degradation, or deadenylation-dependent mRNA decaping and subsequent 5'-3' exonucleolytic degradation by xrn1. May also be involved in post-transcriptional maturation of mRNA poly(A) tails. The protein is PAN2-PAN3 deadenylation complex catalytic subunit pan2 of Emericella nidulans (strain FGSC A4 / ATCC 38163 / CBS 112.46 / NRRL 194 / M139) (Aspergillus nidulans).